A 389-amino-acid chain; its full sequence is ATP phosphoribosyltransferase regulatory subunit (389 aa).

Belongs to the class-II aminoacyl-tRNA synthetase family. HisZ subfamily. As to quaternary structure, heteromultimer composed of HisG and HisZ subunits.

It is found in the cytoplasm. The protein operates within amino-acid biosynthesis; L-histidine biosynthesis; L-histidine from 5-phospho-alpha-D-ribose 1-diphosphate: step 1/9. Required for the first step of histidine biosynthesis. May allow the feedback regulation of ATP phosphoribosyltransferase activity by histidine. This chain is ATP phosphoribosyltransferase regulatory subunit, found in Moorella thermoacetica (strain ATCC 39073 / JCM 9320).